A 437-amino-acid polypeptide reads, in one-letter code: MASSLYSFLLALSIVYIFVAPTHSTSRTALNHRHEAKVTGFQIMLEHVDSGKNLTKFQLLERAIERGSRRLQRLEAMLNGPSGVETSVYAGDGEYLMNLSIGTPAQPFSAIMDTGSDLIWTQCQPCTQCFNQSTPIFNPQGSSSFSTLPCSSQLCQALSSPTCSNNFCQYTYGYGDGSETQGSMGTETLTFGSVSIPNITFGCGENNQGFGQGNGAGLVGMGRGPLSLPSQLDVTKFSYCMTPIGSSTPSNLLLGSLANSVTAGSPNTTLIQSSQIPTFYYITLNGLSVGSTRLPIDPSAFALNSNNGTGGIIIDSGTTLTYFVNNAYQSVRQEFISQINLPVVNGSSSGFDLCFQTPSDPSNLQIPTFVMHFDGGDLELPSENYFISPSNGLICLAMGSSSQGMSIFGNIQQQNMLVVYDTGNSVVSFASAQCGAS.

Positions 1–24 (MASSLYSFLLALSIVYIFVAPTHS) are cleaved as a signal peptide. Residues 25–78 (TSRTALNHRHEAKVTGFQIMLEHVDSGKNLTKFQLLERAIERGSRRLQRLEAML) constitute a propeptide, activation peptide. N53 and N98 each carry an N-linked (GlcNAc...) asparagine glycan. Residues 95 to 430 (YLMNLSIGTP…DTGNSVVSFA (336 aa)) enclose the Peptidase A1 domain. D113 is a catalytic residue. 6 disulfide bridges follow: C123–C126, C129–C203, C150–C168, C155–C163, C240–C434, and C354–C395. N131 is a glycosylation site (N-linked (GlcNAc...) asparagine). N-linked (GlcNAc...) asparagine glycans are attached at residues N198, N267, and N307. D315 is a catalytic residue. N345 is a glycosylation site (N-linked (GlcNAc...) asparagine).

The protein belongs to the peptidase A1 family.

The protein localises to the secreted. It carries out the reaction Similar to pepsin, but also cleaves on either side of Asp and at Lys-|-Arg.. Inhibited by pepstatin and by diazoacetyl-D,L-norleucine methyl ester (DAN) in the presence of Cu(2+) ions. Functionally, extracellular proteinase found in the pitcher fluid of carnivorous plants. Digest prey for nitrogen uptake. The protein is Aspartic proteinase nepenthesin-1 (nep1) of Nepenthes gracilis (Slender pitcher plant).